A 179-amino-acid chain; its full sequence is Large ribosomal subunit protein uL5 (179 aa).

This sequence belongs to the universal ribosomal protein uL5 family. As to quaternary structure, part of the 50S ribosomal subunit; part of the 5S rRNA/L5/L18/L25 subcomplex. Contacts the 5S rRNA and the P site tRNA. Forms a bridge to the 30S subunit in the 70S ribosome.

Its function is as follows. This is one of the proteins that bind and probably mediate the attachment of the 5S RNA into the large ribosomal subunit, where it forms part of the central protuberance. In the 70S ribosome it contacts protein S13 of the 30S subunit (bridge B1b), connecting the 2 subunits; this bridge is implicated in subunit movement. Contacts the P site tRNA; the 5S rRNA and some of its associated proteins might help stabilize positioning of ribosome-bound tRNAs. This Prochlorococcus marinus (strain SARG / CCMP1375 / SS120) protein is Large ribosomal subunit protein uL5.